Here is a 217-residue protein sequence, read N- to C-terminus: Large ribosomal subunit protein uL1 (217 aa).

It belongs to the universal ribosomal protein uL1 family. Component of the large ribosomal subunit (LSU). Mature ribosomes consist of a small (40S) and a large (60S) subunit. The 40S subunit contains about 32 different proteins and 1 molecule of RNA (18S). The 60S subunit contains 45 different proteins and 3 molecules of RNA (25S, 5.8S and 5S). uL1 forms part of the L1 stalk.

The protein resides in the cytoplasm. In terms of biological role, component of the ribosome, a large ribonucleoprotein complex responsible for the synthesis of proteins in the cell. The small ribosomal subunit (SSU) binds messenger RNAs (mRNAs) and translates the encoded message by selecting cognate aminoacyl-transfer RNA (tRNA) molecules. The large subunit (LSU) contains the ribosomal catalytic site termed the peptidyl transferase center (PTC), which catalyzes the formation of peptide bonds, thereby polymerizing the amino acids delivered by tRNAs into a polypeptide chain. The nascent polypeptides leave the ribosome through a tunnel in the LSU and interact with protein factors that function in enzymatic processing, targeting, and the membrane insertion of nascent chains at the exit of the ribosomal tunnel. uL1 forms part of the L1 stalk, a mobile element that plays a role in evacuating the exit-site tRNA. The protein is Large ribosomal subunit protein uL1 (RPL10A) of Candida albicans (strain SC5314 / ATCC MYA-2876) (Yeast).